Consider the following 439-residue polypeptide: Homogentisate 1,2-dioxygenase (439 aa).

Catalysis depends on histidine 293, which acts as the Proton acceptor. Residues histidine 336 and glutamate 342 each coordinate Fe cation. Residues tyrosine 351 and histidine 372 each contribute to the homogentisate site. Histidine 372 serves as a coordination point for Fe cation.

Belongs to the homogentisate dioxygenase family. In terms of assembly, hexamer; dimer of trimers. It depends on Fe cation as a cofactor.

It catalyses the reaction homogentisate + O2 = 4-maleylacetoacetate + H(+). The protein operates within amino-acid degradation; L-phenylalanine degradation; acetoacetate and fumarate from L-phenylalanine: step 4/6. Its function is as follows. Involved in the catabolism of homogentisate (2,5-dihydroxyphenylacetate or 2,5-OH-PhAc), a central intermediate in the degradation of phenylalanine and tyrosine. Catalyzes the oxidative ring cleavage of the aromatic ring of homogentisate to yield maleylacetoacetate. The sequence is that of Homogentisate 1,2-dioxygenase from Cupriavidus pinatubonensis (strain JMP 134 / LMG 1197) (Cupriavidus necator (strain JMP 134)).